Reading from the N-terminus, the 346-residue chain is MELAPVRHNWTHSEVKAIFEMPFNDLLFKAASVHRANFNPNEVQISTLLSIKTGACPEDCKYCPQSGHYRTDLERERLIEVEKVVEQARLAKQKGATRFCMGAAWSDPKDRDMPYISQMVKEVKELGLETCMTLGMLNNEKAHELRNAGLDYYNHNLDTSPEYYEQIISTRTFQDRLDTIGNVRDAGMKVCSGGIVGMGEQAADRYGLLMQLANLDQQPESVPINMLVKVKGTPLENVDDLDHFEFIRTIATARIMMPHSYVRLSAGRNAMNEQMQSMCFFAGANSIFYGDKLLTTENPDADADMALIKKLGMNPETRHDYSDEAVAASLSSQVADKATSKLFYEA.

The 225-residue stretch at 41–265 folds into the Radical SAM core domain; sequence NEVQISTLLS…MMPHSYVRLS (225 aa). Residues cysteine 56, cysteine 60, and cysteine 63 each contribute to the [4Fe-4S] cluster site. Residues cysteine 100, cysteine 131, cysteine 191, and arginine 263 each contribute to the [2Fe-2S] cluster site.

The protein belongs to the radical SAM superfamily. Biotin synthase family. As to quaternary structure, homodimer. It depends on [4Fe-4S] cluster as a cofactor. Requires [2Fe-2S] cluster as cofactor.

It catalyses the reaction (4R,5S)-dethiobiotin + (sulfur carrier)-SH + 2 reduced [2Fe-2S]-[ferredoxin] + 2 S-adenosyl-L-methionine = (sulfur carrier)-H + biotin + 2 5'-deoxyadenosine + 2 L-methionine + 2 oxidized [2Fe-2S]-[ferredoxin]. It functions in the pathway cofactor biosynthesis; biotin biosynthesis; biotin from 7,8-diaminononanoate: step 2/2. Functionally, catalyzes the conversion of dethiobiotin (DTB) to biotin by the insertion of a sulfur atom into dethiobiotin via a radical-based mechanism. This is Biotin synthase from Pseudoalteromonas translucida (strain TAC 125).